We begin with the raw amino-acid sequence, 415 residues long: Tyrosine--tRNA ligase (415 aa).

An L-tyrosine-binding site is contributed by Y40. Positions 45–54 match the 'HIGH' region motif; sequence ATAKSLHVGS. Residues Y178 and Q182 each contribute to the L-tyrosine site. The short motif at 238-242 is the 'KMSKS' region element; it reads KMGKS. Position 241 (K241) interacts with ATP. Residues 350–414 enclose the S4 RNA-binding domain; that stretch reads ASIVQLIVKT…GKKRHALVQL (65 aa).

Belongs to the class-I aminoacyl-tRNA synthetase family. TyrS type 1 subfamily. In terms of assembly, homodimer.

The protein localises to the cytoplasm. It carries out the reaction tRNA(Tyr) + L-tyrosine + ATP = L-tyrosyl-tRNA(Tyr) + AMP + diphosphate + H(+). In terms of biological role, catalyzes the attachment of tyrosine to tRNA(Tyr) in a two-step reaction: tyrosine is first activated by ATP to form Tyr-AMP and then transferred to the acceptor end of tRNA(Tyr). This Ruegeria pomeroyi (strain ATCC 700808 / DSM 15171 / DSS-3) (Silicibacter pomeroyi) protein is Tyrosine--tRNA ligase.